A 228-amino-acid chain; its full sequence is Geranylgeranylglyceryl phosphate synthase (228 aa).

Sn-glycerol 1-phosphate is bound at residue K14. Mg(2+) is bound by residues D16 and T42. Residues 160-165, G190, and 210-211 each bind sn-glycerol 1-phosphate; these read YIEYSG and GN.

The protein belongs to the GGGP/HepGP synthase family. Group I subfamily. It depends on Mg(2+) as a cofactor.

The protein resides in the cytoplasm. It catalyses the reaction sn-glycerol 1-phosphate + (2E,6E,10E)-geranylgeranyl diphosphate = sn-3-O-(geranylgeranyl)glycerol 1-phosphate + diphosphate. The protein operates within membrane lipid metabolism; glycerophospholipid metabolism. Prenyltransferase that catalyzes the transfer of the geranylgeranyl moiety of geranylgeranyl diphosphate (GGPP) to the C3 hydroxyl of sn-glycerol-1-phosphate (G1P). This reaction is the first ether-bond-formation step in the biosynthesis of archaeal membrane lipids. The sequence is that of Geranylgeranylglyceryl phosphate synthase from Methanocella arvoryzae (strain DSM 22066 / NBRC 105507 / MRE50).